Here is an 889-residue protein sequence, read N- to C-terminus: Disease resistance protein UNI (889 aa).

Residues 19–64 are a coiled coil; that stretch reads NCLIGKSYIRTLEKNLRALQREMEDLRAIQHEVQNKVARDEARHQR. Residues 131 to 152 form a disordered region; the sequence is GNFDEVSQPPPRSEVEERPTQP. Residues 137 to 440 enclose the NB-ARC domain; the sequence is SQPPPRSEVE…CEGFIGEDQV (304 aa). 179–186 is an ATP binding site; it reads GMGGVGKT. LRR repeat units follow at residues 510 to 532, 533 to 555, 557 to 580, 581 to 603, 604 to 625, 626 to 652, 653 to 676, 698 to 721, and 825 to 848; these read WGAVRKMSLMDNDIEEITCESKC, SELTTLFLQSNKLKNLPGAFIRY, QKLVVLDLSYNRDFNKLPEQISGL, VSLQFLDLSNTSIEHMPIGLKEL, KKLTFLDLTYTDRLCSISGISR, LLSLRLLRLLGSKVHGDASVLKELQQL, QNLQELAITVSAELISLDQRLAKL, MENLSSLRVENSYFSEIKCRESET, and CPKLRKLPLNATSVSKVEEFEIHM.

Belongs to the disease resistance NB-LRR family. In terms of assembly, interacts with RPT2A.

Functionally, involved in disease resistance via the salicylic acid (SA) signaling pathway. Involved in shoot architecture development via the cytokinin signaling pathway. The protein is Disease resistance protein UNI of Arabidopsis thaliana (Mouse-ear cress).